We begin with the raw amino-acid sequence, 333 residues long: Cathepsin M (333 aa).

The N-terminal stretch at 1 to 15 (MTSAIFLAMLCLGMA) is a signal peptide. A propeptide spans 16–113 (LPSPAPDPIL…KSVQKRLSVN (98 aa)) (activation peptide). Intrachain disulfides connect cysteine 135/cysteine 178 and cysteine 169/cysteine 211. Residue cysteine 138 is part of the active site. Residues asparagine 217, asparagine 221, and asparagine 268 are each glycosylated (N-linked (GlcNAc...) asparagine). Cysteine 269 and cysteine 322 are oxidised to a cystine. Residues histidine 276 and asparagine 300 contribute to the active site.

The protein belongs to the peptidase C1 family. In terms of tissue distribution, placenta.

The protein resides in the lysosome. The chain is Cathepsin M (Ctsm) from Mus musculus (Mouse).